The primary structure comprises 507 residues: Protein DETOXIFICATION 41 (507 aa).

The Cytoplasmic portion of the chain corresponds to 1–62 (MSSTETYEPL…KLLWTLSGAS (62 aa)). The chain crosses the membrane as a helical span at residues 63–83 (IVVSVLNYMLSFVTVMFTGHL). Over 84–92 (GSLQLAGAS) the chain is Vacuolar. A helical membrane pass occupies residues 93–113 (IATVGIQGLAYGIMLGMASAV). Residues 114-137 (QTVCGQAYGARQYSSMGIICQRAM) lie on the Cytoplasmic side of the membrane. The helical transmembrane segment at 138-158 (VLHLAAAVFLTFLYWYSGPIL) threads the bilayer. The Vacuolar segment spans residues 159–170 (KTMGQSVAIAHE). Residues 171-191 (GQIFARGMIPQIYAFALACPM) traverse the membrane as a helical segment. Residues 192-202 (QRFLQAQNIVN) lie on the Cytoplasmic side of the membrane. A helical transmembrane segment spans residues 203–223 (PLAYMSLGVFLLHTLLTWLVT). A topological domain (vacuolar) is located at residue Asn224. A helical transmembrane segment spans residues 225–245 (VLDFGLLGAALILSFSWWLLV). The Cytoplasmic portion of the chain corresponds to 246–283 (AVNGMYILMSPNCKETWTGFSTRAFRGIWPYFKLTVAS). The helical transmembrane segment at 284–304 (AVMLCLEIWYNQGLVIISGLL) threads the bilayer. Topologically, residues 305–312 (SNPTISLD) are vacuolar. Residues 313–333 (AISICMYYLNWDMQFMLGLSA) traverse the membrane as a helical segment. At 334 to 355 (AISVRVSNELGAGNPRVAMLSV) the chain is on the cytoplasmic side. Residues 356 to 376 (VVVNITTVLISSVLCVIVLVF) form a helical membrane-spanning segment. Residues 377–389 (RVGLSKAFTSDAE) are Vacuolar-facing. A helical transmembrane segment spans residues 390–410 (VIAAVSDLFPLLAVSIFLNGI). Topologically, residues 411-425 (QPILSGVAIGSGWQA) are cytoplasmic. The chain crosses the membrane as a helical span at residues 426–446 (VVAYVNLVTYYVIGLPIGCVL). Topologically, residues 447-453 (GFKTSLG) are vacuolar. Residues 454–474 (VAGIWWGMIAGVILQTLTLIV) traverse the membrane as a helical segment. The Cytoplasmic segment spans residues 475–507 (LTLKTNWTSEVENAAQRVKTSATENQEMANAGV).

Belongs to the multi antimicrobial extrusion (MATE) (TC 2.A.66.1) family. In terms of tissue distribution, expressed in reproductive tissues, from buds to siliques. Restricted to the endothelium layer of the ovule and the seed coat.

The protein localises to the vacuole membrane. Its pathway is secondary metabolite biosynthesis; flavonoid biosynthesis. Functionally, acts as a flavonoid/H(+)-antiporter that control the vacuolar sequestration of flavonoids in the seed coat endothelium. Could transport the anthocyanin cyanidin-3-O-glucoside and epicatechin 3'-O-glucoside in vitro. This Arabidopsis thaliana (Mouse-ear cress) protein is Protein DETOXIFICATION 41.